A 485-amino-acid chain; its full sequence is NADH-quinone oxidoreductase subunit N (485 aa).

14 consecutive transmembrane segments (helical) span residues 8–28 (LIALLPLLIVGLTVVVVMLSI), 35–55 (FLNATLSVIGLNAALVSLWFV), 71–91 (GFAMLYTGLVLLASLATCTFA), 105–125 (FYLLVLIAALGGILLANANHL), 127–147 (SLFLGIELISLPLFGLVGYAF), 159–179 (YTILSAAASSFLLFGMALVYA), 203–223 (LLAGFGLMIVGLGFKLSLVPF), 235–255 (PAPVSTFLATASKIAIFGVVM), 271–291 (VVLAIIAFASIIFGNLMALSQ), 297–317 (LLGYSSISHLGYLLVALIALQ), 326–346 (VGVYLVGYLFSSLGAFGVVSL), 373–393 (AAVMTVMMLSLAGIPMTLGFI), 408–430 (WWLVGAVVVGSAIGLYYYLRVAV), and 455–475 (IVVLISALLVLVLGVWPQPLI).

The protein belongs to the complex I subunit 2 family. In terms of assembly, NDH-1 is composed of 13 different subunits. Subunits NuoA, H, J, K, L, M, N constitute the membrane sector of the complex.

The protein localises to the cell inner membrane. The catalysed reaction is a quinone + NADH + 5 H(+)(in) = a quinol + NAD(+) + 4 H(+)(out). NDH-1 shuttles electrons from NADH, via FMN and iron-sulfur (Fe-S) centers, to quinones in the respiratory chain. The immediate electron acceptor for the enzyme in this species is believed to be ubiquinone. Couples the redox reaction to proton translocation (for every two electrons transferred, four hydrogen ions are translocated across the cytoplasmic membrane), and thus conserves the redox energy in a proton gradient. The sequence is that of NADH-quinone oxidoreductase subunit N from Escherichia coli O81 (strain ED1a).